Reading from the N-terminus, the 63-residue chain is MPTKPPYPREAYIVTIEKGKPGQTVTWYQLRADHPKPDSLISEHPTAQEAMDAKKRYEDPDKE.

A disordered region spans residues 35–63; sequence PKPDSLISEHPTAQEAMDAKKRYEDPDKE. Basic and acidic residues predominate over residues 51 to 63; that stretch reads MDAKKRYEDPDKE.

This is an uncharacterized protein from Escherichia coli O157:H7.